The sequence spans 267 residues: Small ribosomal subunit protein uS2 (267 aa).

Residues 1–72 form a disordered region; it reads MSGNEKEGLD…QLDEDVMPDE (72 aa). Residues 10 to 72 show a composition bias toward acidic residues; the sequence is DASDSDFDPS…QLDEDVMPDE (63 aa).

Belongs to the universal ribosomal protein uS2 family. In terms of processing, the N-terminus is blocked.

This is Small ribosomal subunit protein uS2 (rps2) from Haloarcula marismortui (strain ATCC 43049 / DSM 3752 / JCM 8966 / VKM B-1809) (Halobacterium marismortui).